We begin with the raw amino-acid sequence, 192 residues long: MSLDTVVEDVRDEARARAEDIREAAESEADEIVAEAEADAERIREERLAEVDRQIDQEREQTLSSAKLEAKQERLGARRDVLEDVYDDVEAAIEGLDGDRRRELTETLLDATLAEFDDDEDVAVYTHTEDVDLVEELVEDRNAVVDGEIDCLGGVVAESDTSRVRVNNTFDSILESVWDDELKNISERLFDQ.

Belongs to the V-ATPase E subunit family. In terms of assembly, has multiple subunits with at least A(3), B(3), C, D, E, F, H, I and proteolipid K(x).

The protein resides in the cell membrane. Its function is as follows. Component of the A-type ATP synthase that produces ATP from ADP in the presence of a proton gradient across the membrane. This Halorubrum lacusprofundi (strain ATCC 49239 / DSM 5036 / JCM 8891 / ACAM 34) protein is A-type ATP synthase subunit E.